The sequence spans 258 residues: Thiazole synthase (258 aa).

Catalysis depends on Lys100, which acts as the Schiff-base intermediate with DXP. 1-deoxy-D-xylulose 5-phosphate contacts are provided by residues Gly161, Ala187–Gly188, and Asn209–Thr210.

This sequence belongs to the ThiG family. In terms of assembly, homotetramer. Forms heterodimers with either ThiH or ThiS.

Its subcellular location is the cytoplasm. The catalysed reaction is [ThiS sulfur-carrier protein]-C-terminal-Gly-aminoethanethioate + 2-iminoacetate + 1-deoxy-D-xylulose 5-phosphate = [ThiS sulfur-carrier protein]-C-terminal Gly-Gly + 2-[(2R,5Z)-2-carboxy-4-methylthiazol-5(2H)-ylidene]ethyl phosphate + 2 H2O + H(+). It functions in the pathway cofactor biosynthesis; thiamine diphosphate biosynthesis. Its function is as follows. Catalyzes the rearrangement of 1-deoxy-D-xylulose 5-phosphate (DXP) to produce the thiazole phosphate moiety of thiamine. Sulfur is provided by the thiocarboxylate moiety of the carrier protein ThiS. In vitro, sulfur can be provided by H(2)S. This chain is Thiazole synthase, found in Campylobacter jejuni subsp. jejuni serotype O:6 (strain 81116 / NCTC 11828).